The chain runs to 133 residues: UPF0102 protein AB57_1130 (133 aa).

The protein belongs to the UPF0102 family.

The protein is UPF0102 protein AB57_1130 of Acinetobacter baumannii (strain AB0057).